A 339-amino-acid polypeptide reads, in one-letter code: NADH-quinone oxidoreductase subunit H (339 aa).

The next 9 membrane-spanning stretches (helical) occupy residues 9-29 (IFPL…LILC), 50-70 (PNVV…KLLF), 82-102 (ILFI…WAVI), 115-135 (VGVL…IIAG), 161-181 (MGLV…SGII), 187-207 (MPWW…ISVL), 235-255 (MGFA…SAMT), 275-295 (IPGF…FLWI), and 311-331 (GWKV…SVLV).

The protein belongs to the complex I subunit 1 family. In terms of assembly, NDH-1 is composed of 14 different subunits. Subunits NuoA, H, J, K, L, M, N constitute the membrane sector of the complex.

It is found in the cell inner membrane. It catalyses the reaction a quinone + NADH + 5 H(+)(in) = a quinol + NAD(+) + 4 H(+)(out). In terms of biological role, NDH-1 shuttles electrons from NADH, via FMN and iron-sulfur (Fe-S) centers, to quinones in the respiratory chain. The immediate electron acceptor for the enzyme in this species is believed to be ubiquinone. Couples the redox reaction to proton translocation (for every two electrons transferred, four hydrogen ions are translocated across the cytoplasmic membrane), and thus conserves the redox energy in a proton gradient. This subunit may bind ubiquinone. This Rickettsia conorii (strain ATCC VR-613 / Malish 7) protein is NADH-quinone oxidoreductase subunit H.